Reading from the N-terminus, the 108-residue chain is uncharacterized protein (108 aa).

3 consecutive transmembrane segments (helical) span residues 26-46 (GAVYTGEFTLYLLFIFGALII), 54-74 (LMTLFGLAALAFSLSVSPLIF), and 84-104 (INYQLFWLSIFLGAIAFCIYM).

It is found in the cell membrane. This is an uncharacterized protein from Methanocaldococcus jannaschii (strain ATCC 43067 / DSM 2661 / JAL-1 / JCM 10045 / NBRC 100440) (Methanococcus jannaschii).